The primary structure comprises 669 residues: DNA mismatch repair protein MutL (669 aa).

Residues 356–371 are compositionally biased toward basic and acidic residues; that stretch reads FEQRQNTENKQEKTFS. The disordered stretch occupies residues 356-379; that stretch reads FEQRQNTENKQEKTFSSEESNSKP.

This sequence belongs to the DNA mismatch repair MutL/HexB family.

Functionally, this protein is involved in the repair of mismatches in DNA. It is required for dam-dependent methyl-directed DNA mismatch repair. May act as a 'molecular matchmaker', a protein that promotes the formation of a stable complex between two or more DNA-binding proteins in an ATP-dependent manner without itself being part of a final effector complex. This Staphylococcus aureus (strain MRSA252) protein is DNA mismatch repair protein MutL.